A 144-amino-acid polypeptide reads, in one-letter code: Probable 4-amino-4-deoxy-L-arabinose-phosphoundecaprenol flippase subunit ArnF (144 aa).

The Cytoplasmic segment spans residues 1–6; sequence MTHRRA. The chain crosses the membrane as a helical span at residues 7 to 24; that stretch reads TLCAMASVALVSAAQLGM. Over 25-56 the chain is Periplasmic; the sequence is RWSMSRLPSPVQWLEMQEHAQLDLSALRVVCA. A helical membrane pass occupies residues 57–77; it reads SITAYALSMLFWLLALRVLPL. The Cytoplasmic portion of the chain corresponds to 78–80; that stretch reads SRA. A helical membrane pass occupies residues 81 to 101; sequence YSLLSISYALVYTLAATLPFF. Residues 102-104 lie on the Periplasmic side of the membrane; the sequence is HET. The chain crosses the membrane as a helical span at residues 105–125; it reads FTVSKTVGVSLIVAGVLTINL. At 126–144 the chain is on the cytoplasmic side; sequence RRLPRPSPQDLSHENQRFR.

The protein belongs to the ArnF family. In terms of assembly, heterodimer of ArnE and ArnF.

It is found in the cell inner membrane. Its pathway is bacterial outer membrane biogenesis; lipopolysaccharide biosynthesis. In terms of biological role, translocates 4-amino-4-deoxy-L-arabinose-phosphoundecaprenol (alpha-L-Ara4N-phosphoundecaprenol) from the cytoplasmic to the periplasmic side of the inner membrane. In Pseudomonas syringae pv. syringae (strain B728a), this protein is Probable 4-amino-4-deoxy-L-arabinose-phosphoundecaprenol flippase subunit ArnF.